A 163-amino-acid chain; its full sequence is Large ribosomal subunit protein uL10 (163 aa).

The protein belongs to the universal ribosomal protein uL10 family. As to quaternary structure, part of the ribosomal stalk of the 50S ribosomal subunit. The N-terminus interacts with L11 and the large rRNA to form the base of the stalk. The C-terminus forms an elongated spine to which L12 dimers bind in a sequential fashion forming a multimeric L10(L12)X complex.

Functionally, forms part of the ribosomal stalk, playing a central role in the interaction of the ribosome with GTP-bound translation factors. The chain is Large ribosomal subunit protein uL10 (rplJ) from Haemophilus influenzae (strain ATCC 51907 / DSM 11121 / KW20 / Rd).